Consider the following 136-residue polypeptide: MPPKAADKKPAAKAPVASKAPEKKDAGKKTASTGEKKKRTKARRETYSSYIYKVLKQVHPDTGISNRAMSILNSFVNDIFERVATEASKLAAYNKKSTISSREIQTSVRLILPGELAKHAVSEGTKAVTKYSSSTK.

The span at 1–10 (MPPKAADKKP) shows a compositional bias: basic and acidic residues. The disordered stretch occupies residues 1–44 (MPPKAADKKPAAKAPVASKAPEKKDAGKKTASTGEKKKRTKARR). Lys8 and Lys9 each carry N6-acetyllysine; alternate. Glycyl lysine isopeptide (Lys-Gly) (interchain with G-Cter in SUMO); alternate cross-links involve residues Lys8 and Lys9. Lys13 is subject to N6-acetyllysine. Lys23 bears the N6-acetyllysine; alternate mark. Lys23 is covalently cross-linked (Glycyl lysine isopeptide (Lys-Gly) (interchain with G-Cter in SUMO); alternate). Lys24 participates in a covalent cross-link: Glycyl lysine isopeptide (Lys-Gly) (interchain with G-Cter in SUMO). A Glycyl lysine isopeptide (Lys-Gly) (interchain with G-Cter in ubiquitin) cross-link involves residue Lys130.

The protein belongs to the histone H2B family. In terms of assembly, the nucleosome is a histone octamer containing two molecules each of H2A, H2B, H3 and H4 assembled in one H3-H4 heterotetramer and two H2A-H2B heterodimers. The octamer wraps approximately 147 bp of DNA. Post-translationally, monoubiquitinated to form H2BK123ub1. H2BK123ub1 gives a specific tag for epigenetic transcriptional activation and is also prerequisite for H3K4me and H3K79me formation. H2BK123ub1 also modulates the formation of double-strand breaks during meiosis and is a prerequisite for DNA-damage checkpoint activation. Acetylated by GCN5 to form H2BK11ac and H2BK16ac. H2BK16ac can also be formed by ESA1. Acetylation of N-terminal lysines and particularly formation of H2BK11acK16ac has a positive effect on transcription. In terms of processing, sumoylation to form H2BK6su or H2BK7su, and probably also H2BK16su or H2BK17su, occurs preferentially near the telomeres and represses gene transcription.

The protein localises to the nucleus. Its subcellular location is the chromosome. Core component of nucleosome. Nucleosomes wrap and compact DNA into chromatin, limiting DNA accessibility to the cellular machineries which require DNA as a template. Histones thereby play a central role in transcription regulation, DNA repair, DNA replication and chromosomal stability. DNA accessibility is regulated via a complex set of post-translational modifications of histones, also called histone code, and nucleosome remodeling. The sequence is that of Histone H2B (hh2b) from Rosellinia necatrix (White root-rot fungus).